A 496-amino-acid chain; its full sequence is Aminoacetaldehyde dehydrogenase (496 aa).

Residues Leu166, Trp168, Lys192, Ser246, Thr249, and Tyr256 each contribute to the NADH site. Glu268 serves as the catalytic Proton acceptor. Cys269 lines the NADH pocket. The Nucleophile role is filled by Cys303. Residues Lys353 and Glu398 each coordinate NADH.

The protein belongs to the aldehyde dehydrogenase family. As to quaternary structure, homotetramer, formed by two symmetrical dimers.

It catalyses the reaction aminoacetaldehyde + NAD(+) + H2O = glycine + NADH + 2 H(+). The catalysed reaction is 3-aminopropanal + NAD(+) + H2O = beta-alanine + NADH + 2 H(+). In terms of biological role, NAD(+)-dependent aminoaldehyde dehydrogenase highly efficient with protonated aminoacetaldehyde (ACTAL) and 3-aminopropanaldehyde (APAL). Likely participates in a still uncharacterized metabolic pathway present in proteobacteria species, in which ACTAL might be an intermediate, yielding glycine. Highly prefers NAD(+) over NADP(+). Shows very poor activity with acetaldehyde, propanaldehyde, butanaldehyde, pentanaldehyde, dimethylaminoacetaldehyde, trimethylaminoacetaldehyde (betaine aldehyde), trimethylaminobutanaldehyde, short aliphatic hydroxyaldehydes such as 3-hydroxypropanaldehyde and 2-hydroxypropanaldehyde (lactaldehyde), and aromatic aldehydes. The chain is Aminoacetaldehyde dehydrogenase from Pseudomonas aeruginosa (strain ATCC 15692 / DSM 22644 / CIP 104116 / JCM 14847 / LMG 12228 / 1C / PRS 101 / PAO1).